Consider the following 522-residue polypeptide: MTANAYDVIVIGGGISGLSAAKLLVDSGLNPVVLEARSRVGGRTYTVQNKETKWVDLGGAYIGPTQNRILRIAKQYGVKTYKVNEEESLVHYVKGKSYPFKGPFPPMWNPFAYMDYNNLWRTMDKMGMEIPKEAPWRAPHAEEWDKMTMQQLFDKICWTRSARRFATLFVNVNVTSEPHEVSALWFLWYVKQCGGTMRIFSTTNGGQERKFAGGANQISEGMARELGDRVKLSRAVCSIDQTGDLVEVRTVNEEVYKAKYVILAIPPGLNLKIHFNPELPPLRNQLIHRVPMGSVIKCMVYYKENFWRKKGYCGSMVIEEEDAPIGLTLDDTKPDGSVPAIMGFILARKSRKLANLTRDERKRRICEIYARVLGSEEALYPVHYEEKNWCEEEYSGGCYTAYFPPGIMTQFGRVLREPVGRLYFAGTETATEWSGYMEGAVQAGERASREVMCAMGKLHASQIWQSEPESMDVPARPFVTTFWERNLPSVGGFLKFMGVSSFLAAATAAGLVACKKGLLPRC.

Residues 1–492 (MTANAYDVIV…WERNLPSVGG (492 aa)) are Cytoplasmic-facing. Residue Cys398 is modified to S-8alpha-FAD cysteine. Residues 493–513 (FLKFMGVSSFLAAATAAGLVA) form a helical; Anchor for type IV membrane protein membrane-spanning segment. Over 514–522 (CKKGLLPRC) the chain is Mitochondrial intermembrane.

It belongs to the flavin monoamine oxidase family. As to quaternary structure, monomer, homo- or heterodimer (containing two subunits of similar size). Each subunit contains a covalently bound flavin. Enzymatically active as monomer. It depends on FAD as a cofactor. In terms of tissue distribution, strongest expression in brain and intestine, followed by liver, heart and gill. Little expression in spleen, eye or muscle. In brain, highest activity in noradrenergic and serotonergic cell groups and those of the habenulointerpeduncular pathway; moderate levels in dopaminergic cell clusters.

The protein localises to the mitochondrion outer membrane. It carries out the reaction a secondary aliphatic amine + O2 + H2O = a primary amine + an aldehyde + H2O2. The enzyme catalyses a primary methyl amine + O2 + H2O = an aldehyde + H2O2 + NH4(+). The catalysed reaction is serotonin + O2 + H2O = (5-hydroxyindol-3-yl)acetaldehyde + H2O2 + NH4(+). It catalyses the reaction 2-phenylethylamine + O2 + H2O = 2-phenylacetaldehyde + H2O2 + NH4(+). It carries out the reaction tyramine + O2 + H2O = (4-hydroxyphenyl)acetaldehyde + H2O2 + NH4(+). The enzyme catalyses dopamine + O2 + H2O = 3,4-dihydroxyphenylacetaldehyde + H2O2 + NH4(+). The catalysed reaction is (R)-adrenaline + O2 + H2O = (R)-3,4-dihydroxymandelaldehyde + methylamine + H2O2. It catalyses the reaction (R)-noradrenaline + O2 + H2O = (R)-3,4-dihydroxymandelaldehyde + H2O2 + NH4(+). It carries out the reaction kynuramine + O2 + H2O = 3-(2-aminophenyl)-3-oxopropanal + H2O2 + NH4(+). The enzyme catalyses tryptamine + O2 + H2O = indole-3-acetaldehyde + H2O2 + NH4(+). With respect to regulation, inhibited by both clorgyline (selective MAOA inhibitor) and deprenyl (selective MAOB inhibitor). Its function is as follows. Catalyzes the oxidative deamination of biogenic and xenobiotic amines and has important functions in the metabolism of neuroactive and vasoactive amines in the central nervous system and peripheral tissues. Preferentially oxidizes serotonin and tyramine. Also catalyzes the oxidative deamination of kynuramine to 3-(2-aminophenyl)-3-oxopropanal that can spontaneously condense to 4-hydroxyquinoline. In Danio rerio (Zebrafish), this protein is Amine oxidase [flavin-containing].